Consider the following 151-residue polypeptide: Macrodomain Ter protein (151 aa).

The protein belongs to the MatP family. As to quaternary structure, homodimer.

It is found in the cytoplasm. In terms of biological role, required for spatial organization of the terminus region of the chromosome (Ter macrodomain) during the cell cycle. Prevents early segregation of duplicated Ter macrodomains during cell division. Binds specifically to matS, which is a 13 bp signature motif repeated within the Ter macrodomain. The protein is Macrodomain Ter protein of Yersinia pseudotuberculosis serotype IB (strain PB1/+).